A 2974-amino-acid polypeptide reads, in one-letter code: MKATVEGEKDASRKVKVPKRPEVNNGGSLEDCISNVFSLLELPGIKWKCFRPKLNAPRGVPLTSDLVLKAYSRCLTDGILCTWRRKPSPPTGNNELLPPTHFFSNDSPKELWVFWYDAEPTALGKYCEGLDSDEELSSANQMNIVSYEVRTILFKALHVVLERDLTKDGFVRFGRWFTMPLVARDHYLHFMYPSHSPAIRFNFFVHGTSTICASIQAQRQPTLIKLARRHFECKTPKRFPVVIGPWSMRGYLIADQMTLLADQKIQEAAEKEWNQWKEYLQLEEKEPENVTEERQKTPEAEPPAPPQTTRVLLASSSDEDQEKNGGELKSEEVSQKIRWMFEPDLRQDKPKEETAAEKEKRMAAREVRRLRRQRREERRREMEKQRRADDNLEDYDSDVVTDQDEDEAGKEEIVNNDVPKMILIEIDNVRLLYPSKFVCITVEEDRQMLESMGFKCHPMPQELQVPGRRPRNKNVVNMSNPLLSTMAVYQYVQNEKRAEREHFYPRNKPVEIETDTNFEILSNPKARRVAPPKSPTFLSWESQRANHFDTTDIFVNRLFEKLFRLDADTFDENPRLIKFACLSSQFIRRKWKWLHKKQILFCGKARKRFGIGSPQNFALNMMKSREKRKEYQPYHRKRPAKSVKEKKKKAKRKVKKFVRYNSPEQFLASMSRTRKKFNAWKQKKKGPPPKKDLAKKEAAADKDKDKDKEKDKEKDKDNDDDPFVMDKVSQLDWANFSEDETNGNSFADIEEALVSEEHIKFSSLYNPAGGDIEEGDETSNESPDEKTPEGSPNGSPRPKEEIEPFFPITYLAAKPSNIESDLGPDVDDMTEEQFNTEYVPKEYDITQDPKKVKNGQIPISEFSKDNQFYHGEICRLGLRGYKKICAERDREEAARRTKWLQLYRLKVEKRSIKTARQCHRDYLRQIAKRCLRKALRRLRITAKKDALAPPPPKPKPVDPVLKKKEDAKKFEMSLKIMERDLGNLDMSAFCQVREKAGPHGVSFPEIILLTNPKWLKVRSTAGYMKPNYFNSPHGSFDHDSEPEFDEQRTGLGEGTSDQYQDGESVDMIDIERELANDPSSYLSNAEHIRTLGEHIGPDGMLSPPASNEMPKGGPLSVGPASIESQGLNQIYPTPPSVQMLQADASQAHSPSIGGKFRSTANDDIDRAAASGKTIVDIEIEDIETGNMQRWNKIANQSKLSKFLVASRDNPILKGRKTKYDTPATDKFEIRCQVERVTVPMAYESMVTRNFECAPPHTFAELIRQSRTGIKKYTRPLQIQSTLARPPPGATSPLPPPTPMFNPHTLPLHHTSPFSAGPMSHHSMGPPAYPPTPGPYPPTTPTYPGMTPRPGSSYGPGYPNHHQMMPPGYPNQMGQMGGMNGMGGMPGMGPIGMQRQFSNPQMYQHHQMMRMQQMRMQGGLPGYGAPGVPQYPQQSPVSGGPESIRNTDAPNDPTVSKLQSAVSRNGKSDDESDAATSIPTATDDATAATTTAAQLQLQRSQAHQIQHQPNQQTMQSLQLTPEQLQIQQSQQVQAVFQQLPDREKRKYQRRQIQLMNGLMPTSLQPASIKALKNPPDANIPYKRQDIIYNPPNPAHPRGDSLTIAIVLSDTLLDLHFDSVFDACPICSCSVSIRSRDLGMYIIPHAVLSSREIGETNKREYTTGTWSGFHVNSATSCTCGFSAIRHRYLSCCAGLFDEDADEATASEHANAPVIPPLFARNTTKTRDMMWFDPQSVHDLALTDQIRQMAFSNSLGKAVSQMATEKEHRRNITNAVDIGTDITVPTEYVLSHVDTLELMMLGMSALGPMQTPETTGNQFTPQSKYLSYFHPWGFQTANEIAELESSEWVDLLDIITPTLESSMKQARRPSVETPFVIEGPMTWKQVVTKAIRGKPPTDEDEDFSLAEPVPAVMRALEQEAVRAAPNIEQYYDQAELGPVDQPKDVMYITIIPDNDDIYERTVKFMHTMTETYERMRLGRHIPFPVSTGTASRFREVLKTYQHQFPYQEQNQQLVEFTNNRLEAVPQELSNNPDPLNTDPEKWSKRLKRKLELSEELKKADEHPAPPSTQSENSEGNAATPAAETLSSIFSDDAFVEERHINSTEEAPTTTERPPNSLPYRITNWHEKDDDTYEHPPEVHDTLPEGFYEREGILRVGKPLEPLRISHTVVSTREFDNMTQHLSDAQGFVSKLRIFLQQMEDLVFHTLSGSSEAFERRGYRYQMAVEGRLKRQKHKRDIEEERLRYEAAKVQDEADKREKMDEADLFPGAEVGEETPSPWVDDELEEKKRNKQKENEQYPAEESQAPSPVPAGMIHIPETLSEQERKVQPTLADMFADPSTVAPINAQNIPWKQRDTRVQNPFPYSNQPPVAFEAVGSNDTDAYSTLPHVIVLYVVNPFSYGAEGQSALHMRIALLSFIRAYNSIVGRLPFTKRTQLQLEIIGMESLDDMVKGIPDYLNDSQVPFDILHDYPVRNERPSESGQEAAARSLSVAVYTHPRVFTPEVYKAVSARCMTAFGPGSQLINTVNNIEKINQEAFYQMSKRSKTALNNMDGYMGMMGSHQVETKAHISYRVPSNIVCLAPPPAIYQMDEEGKPILNQLDEQTLFISYCLVGTEYLVATATDSQGKLIDNCIANMKPRRLHNQVYRYKNKTQILDGMGKLWSFILGVMSSDIKNWRLVVGRLGRIGHGEFRAWTHLLNKTSLLRYSSSLKDICGACRSMPSAIGTPAILSACLITLEPEPSIRIMPKFHDIDESIKKNLIFQTPGDLSCTHILTFPVGTEINLEVQDQTADTKGDENWEFGDLDIMEGLDDGDTEIMKDLGLETPSSAAIRQTGGVSMFFSEDSSSIEIQNQPLASGYYISTAPAPELPSWFWATCPSAKRHSPVHLKSSLHINISEVKNDDIAMESAKDKEKEKEEKDIHPLESRQTEEVLRHVLESYNALSWLNLNRQTGDRYSCLPIHVQHLLRLYHSVARLLV.

Composition is skewed to basic and acidic residues over residues 284–299 (EKEP…KTPE), 340–367 (MFEP…AREV), 374–390 (RREE…RADD), and 624–633 (SREKRKEYQP). Disordered regions lie at residues 284–309 (EKEP…PQTT), 340–394 (MFEP…NLED), 624–654 (SREK…KRKV), 677–749 (FNAW…FADI), 764–801 (LYNP…PKEE), 1032–1063 (PHGS…QDGE), 1099–1134 (GMLS…YPTP), 1140–1159 (LQAD…FRST), 1281–1342 (TLAR…TPTY), 1416–1486 (QGGL…DATA), 2052–2078 (ELKK…ATPA), and 2247–2309 (QDEA…PAGM). Residues 351–396 (KEETAAEKEKRMAAREVRRLRRQRREERRREMEKQRRADDNLEDYD) are a coiled coil. 2 stretches are compositionally biased toward basic residues: residues 634-654 (YHRK…KRKV) and 677-688 (FNAWKQKKKGPP). Basic and acidic residues predominate over residues 689–717 (PKKDLAKKEAAADKDKDKDKEKDKEKDKD). Positions 1035 to 1048 (SFDHDSEPEFDEQR) are enriched in basic and acidic residues. Composition is skewed to polar residues over residues 1122 to 1134 (IESQ…YPTP) and 1140 to 1149 (LQADASQAHS). Pro residues-rich tracts occupy residues 1284–1299 (RPPP…PTPM) and 1326–1340 (PAYP…PTTP). Residues 1443-1464 (IRNTDAPNDPTVSKLQSAVSRN) show a composition bias toward polar residues. The segment covering 1473-1486 (AATSIPTATDDATA) has biased composition (low complexity). A compositionally biased stretch (polar residues) spans 2064–2073 (STQSENSEGN). Positions 2220–2301 (AVEGRLKRQK…EQYPAEESQA (82 aa)) form a coiled coil. 2 stretches are compositionally biased toward basic and acidic residues: residues 2247 to 2258 (QDEADKREKMDE) and 2281 to 2292 (EEKKRNKQKENE). The tract at residues 2347–2974 (WKQRDTRVQN…LYHSVARLLV (628 aa)) is mediates transcriptional repression.

The protein belongs to the Mediator complex subunit 13 family. As to quaternary structure, component of the Mediator complex.

The protein localises to the nucleus. Its function is as follows. Component of the Mediator complex, a coactivator involved in regulated gene transcription of nearly all RNA polymerase II-dependent genes. Mediator functions as a bridge to convey information from gene-specific regulatory proteins to the basal RNA polymerase II transcription machinery. Mediator is recruited to promoters by direct interactions with regulatory proteins and serves as a scaffold for the assembly of a functional preinitiation complex with RNA polymerase II and the general transcription factors. The protein is Mediator of RNA polymerase II transcription subunit 13 (let-19) of Caenorhabditis briggsae.